The following is a 93-amino-acid chain: Small ribosomal subunit protein uS19 (93 aa).

This sequence belongs to the universal ribosomal protein uS19 family.

Functionally, protein S19 forms a complex with S13 that binds strongly to the 16S ribosomal RNA. The sequence is that of Small ribosomal subunit protein uS19 from Brevibacillus brevis (strain 47 / JCM 6285 / NBRC 100599).